The chain runs to 277 residues: Probable ABC transporter permease protein y4oR (277 aa).

The next 7 membrane-spanning stretches (helical) occupy residues 15–35 (LWTLFWCVLAFVYLFPYTWMV), 79–99 (VVTIVSVVLVIAVSAPAAYAL), 109–129 (LLVAILVARIIPGIAIGVPVY), 140–160 (TYQALIIINVAVNIPFAIWLM), 189–209 (IMMPLVLGGMLATAVFVFIAV), 213–233 (FLFALILTTSVSPTAPLAMLG), and 242–262 (WDAVGAAAFLVSTPVIAFAFI). The ABC transmembrane type-1 domain maps to 74–263 (IINSAVVTIV…TPVIAFAFIM (190 aa)).

It belongs to the binding-protein-dependent transport system permease family. MalFG subfamily.

It is found in the cell inner membrane. Probably part of the binding-protein-dependent transport system y4oPQRS. This system probably transports a sugar-like molecule. Probably responsible for the translocation of the substrate across the membrane. The chain is Probable ABC transporter permease protein y4oR from Sinorhizobium fredii (strain NBRC 101917 / NGR234).